Reading from the N-terminus, the 116-residue chain is Large ribosomal subunit protein bL21c (116 aa).

It belongs to the bacterial ribosomal protein bL21 family. Part of the 50S ribosomal subunit.

The protein localises to the plastid. The protein resides in the chloroplast. Functionally, this protein binds to 23S rRNA. In Marchantia polymorpha (Common liverwort), this protein is Large ribosomal subunit protein bL21c.